A 269-amino-acid chain; its full sequence is CUE domain-containing protein 2-B (269 aa).

Positions Ala110 to Asp130 are disordered. The CUE domain occupies Asp131–Val174.

This sequence belongs to the CUEDC2 family. In terms of processing, phosphorylated.

The protein localises to the cytoplasm. It localises to the nucleus. May play a role in targeting proteins for ubiquitination and subsequent proteasomal degradation. This is CUE domain-containing protein 2-B (cuedc2-b) from Xenopus laevis (African clawed frog).